The chain runs to 408 residues: Tryptophan synthase beta chain (408 aa).

Lysine 97 carries the N6-(pyridoxal phosphate)lysine modification.

It belongs to the TrpB family. As to quaternary structure, tetramer of two alpha and two beta chains. Pyridoxal 5'-phosphate is required as a cofactor.

It catalyses the reaction (1S,2R)-1-C-(indol-3-yl)glycerol 3-phosphate + L-serine = D-glyceraldehyde 3-phosphate + L-tryptophan + H2O. It functions in the pathway amino-acid biosynthesis; L-tryptophan biosynthesis; L-tryptophan from chorismate: step 5/5. Its function is as follows. The beta subunit is responsible for the synthesis of L-tryptophan from indole and L-serine. This Pseudomonas syringae pv. syringae protein is Tryptophan synthase beta chain (trpB).